The chain runs to 254 residues: Dihydroanticapsin 7-dehydrogenase (254 aa).

NAD(+) is bound at residue Leu9–Asn31. Substrate is bound at residue Ser139. The active-site Proton acceptor is the Tyr152.

It belongs to the short-chain dehydrogenases/reductases (SDR) family.

It carries out the reaction L-dihydroanticapsin + NAD(+) = L-anticapsin + NADH + H(+). Its pathway is antibiotic biosynthesis; bacilysin biosynthesis. Part of the bacABCDEFG operon responsible for the biosynthesis of bacilysin, an irreversible inactivator of the glutaminase domain of glucosamine synthetase. Catalyzes the dehydrogenation of the C7-hydroxyl group in the 4S-tetrahydrotyrosine (4S-H4Tyr) to yield anticapsin (epoxycyclohexanonyl-Ala). This is Dihydroanticapsin 7-dehydrogenase from Bacillus amyloliquefaciens (Bacillus velezensis).